The sequence spans 607 residues: Glutamine--fructose-6-phosphate aminotransferase [isomerizing] (607 aa).

The active-site Nucleophile; for GATase activity is the cysteine 2. A Glutamine amidotransferase type-2 domain is found at 2–217 (CGIVGIVGHS…DGDWAVVRRD (216 aa)). SIS domains are found at residues 283–422 (LPFD…ARGV) and 455–597 (IARE…VDQP). Catalysis depends on lysine 602, which acts as the For Fru-6P isomerization activity.

In terms of assembly, homodimer.

It localises to the cytoplasm. The enzyme catalyses D-fructose 6-phosphate + L-glutamine = D-glucosamine 6-phosphate + L-glutamate. In terms of biological role, catalyzes the first step in hexosamine metabolism, converting fructose-6P into glucosamine-6P using glutamine as a nitrogen source. The protein is Glutamine--fructose-6-phosphate aminotransferase [isomerizing] of Mesorhizobium japonicum (strain LMG 29417 / CECT 9101 / MAFF 303099) (Mesorhizobium loti (strain MAFF 303099)).